The following is a 736-amino-acid chain: Catalase-1 (736 aa).

Positions 1 to 29 (MSNIISQAGQKAKEALTSAPSSKKVDDLK) are disordered. Arg89 contributes to the heme binding site. His92 is an active-site residue. Arg129 serves as a coordination point for heme. Asn165 is an active-site residue. Heme contacts are provided by Phe178, Arg375, Tyr379, and Arg386. The 3-(S-cysteinyl)-tyrosine (Cys-Tyr) cross-link spans 356–379 (CTSHVVNGIGFSDDPLLQGRNFSY).

This sequence belongs to the catalase family. Homotetramer. The cofactor is heme. Post-translationally, glycosylated; with alpha-glucose and/or alpha-mannose.

Its subcellular location is the secreted. The protein localises to the cell wall. The enzyme catalyses 2 H2O2 = O2 + 2 H2O. In terms of biological role, occurs in almost all aerobically respiring organisms and serves to protect cells from the toxic effects of hydrogen peroxide. The chain is Catalase-1 (cat-1) from Neurospora crassa (strain ATCC 24698 / 74-OR23-1A / CBS 708.71 / DSM 1257 / FGSC 987).